We begin with the raw amino-acid sequence, 240 residues long: Cysteine-rich venom protein triflin (240 aa).

An N-terminal signal peptide occupies residues 1–19 (MIAFIVLPILAAVLQQSSG). The SCP domain occupies 39–166 (DLHNSLRRSV…KYSYFYVCQY (128 aa)). 8 disulfide bridges follow: Cys75–Cys153, Cys92–Cys167, Cys148–Cys164, Cys186–Cys193, Cys189–Cys198, Cys202–Cys235, Cys211–Cys229, and Cys220–Cys233. The 34-residue stretch at 202–235 (CTRENEFTNCDSLVQKSSCQDNYMKSKCPASCFC) folds into the ShKT domain.

Belongs to the CRISP family. As to quaternary structure, forms a stable, non-covalent complex with SSP-2. In terms of tissue distribution, expressed by the venom gland.

The protein localises to the secreted. Functionally, blocks contraction of smooth muscle elicited by high potassium-induced depolarization. May target voltage-gated calcium channels (Cav) on smooth muscle. The chain is Cysteine-rich venom protein triflin from Protobothrops flavoviridis (Habu).